Here is a 254-residue protein sequence, read N- to C-terminus: Peroxisomal membrane protein 11 homolog (254 aa).

The Cytoplasmic segment spans residues 1–91; it reads MAGILSKPNY…ILALFKVKNP (91 aa). A helical transmembrane segment spans residues 92 to 112; the sequence is FAFLNILALIRQSGMYFYWVF. Residues 113 to 227 lie on the Lumenal side of the membrane; that stretch reads DHLILGTNIG…DLIIASTLLK (115 aa). Residues 228 to 248 traverse the membrane as a helical segment; sequence IYPFSQGTIGISGIISALIGA. Topologically, residues 249-254 are cytoplasmic; that stretch reads YQMWPK.

Belongs to the peroxin-11 family.

It localises to the peroxisome membrane. Functionally, involved in peroxisomal proliferation. Could participate in peroxisomal elongation or fission. May be involved in parceling of peroxisomes into regular quanta. The protein is Peroxisomal membrane protein 11 homolog (pex11) of Dictyostelium discoideum (Social amoeba).